The primary structure comprises 637 residues: Chaperone protein DnaK (637 aa).

Thr-196 carries the phosphothreonine; by autocatalysis modification. 2 disordered regions span residues 484-528 and 598-637; these read KATG…EVDT and TEAG…VDDK. The segment covering 501–528 has biased composition (basic and acidic residues); that stretch reads SETEIEKMKKDASSHADEDKKKKEEVDT. Over residues 600–620 the composition is skewed to low complexity; the sequence is AGAPGAAGAAGAAGQGQSASS. The span at 621 to 637 shows a compositional bias: basic and acidic residues; it reads GKDDEVKNADFEVVDDK.

This sequence belongs to the heat shock protein 70 family.

Acts as a chaperone. This is Chaperone protein DnaK from Chloroherpeton thalassium (strain ATCC 35110 / GB-78).